An 811-amino-acid polypeptide reads, in one-letter code: Ribonucleoside-diphosphate reductase large subunit (811 aa).

Residues T231, 246-247 (SC), G277, 450-454 (NLCTE), and 636-640 (PTASS) contribute to the substrate site. The cysteines at positions 247 and 467 are disulfide-linked. Residue N450 is the Proton acceptor of the active site. The Cysteine radical intermediate role is filled by C452. The Proton acceptor role is filled by E454.

This sequence belongs to the ribonucleoside diphosphate reductase large chain family. In terms of assembly, heterotetramer composed of a homodimer of the large subunit (R1) and a homodimer of the small subunit (R2). Larger multisubunit protein complex are also active, composed of (R1)n(R2)n.

It catalyses the reaction a 2'-deoxyribonucleoside 5'-diphosphate + [thioredoxin]-disulfide + H2O = a ribonucleoside 5'-diphosphate + [thioredoxin]-dithiol. In terms of biological role, ribonucleoside-diphosphate reductase holoenzyme provides the precursors necessary for viral DNA synthesis. Allows virus growth in non-dividing cells, as well as reactivation from latency in infected hosts. Catalyzes the biosynthesis of deoxyribonucleotides from the corresponding ribonucleotides. In Amazona oratrix (yellow-headed parrot), this protein is Ribonucleoside-diphosphate reductase large subunit.